A 791-amino-acid polypeptide reads, in one-letter code: Disintegrin and metalloproteinase domain-containing protein 1a (791 aa).

Positions 1–65 (MSVAAAGRGF…LLIFLPSTFC (65 aa)) are cleaved as a signal peptide. Asn-72 carries an N-linked (GlcNAc...) asparagine glycan. A disordered region spans residues 201 to 220 (CSVTPKDSPGDTSHPPRSRK). One can recognise a Peptidase M12B domain in the interval 235–429 (KYVEMFVVVN…HRGACLLDEP (195 aa)). N-linked (GlcNAc...) asparagine glycosylation is present at Asn-256. Intrachain disulfides connect Cys-345–Cys-424, Cys-385–Cys-408, and Cys-387–Cys-393. His-370 lines the Zn(2+) pocket. Glu-371 is an active-site residue. Residues His-374 and His-380 each coordinate Zn(2+). Residues Asn-407 and Asn-484 are each glycosylated (N-linked (GlcNAc...) asparagine). Positions 438-522 (AANCGNGVVE…ECPANSYMQD (85 aa)) constitute a Disintegrin domain. Cys-494 and Cys-514 are disulfide-bonded. N-linked (GlcNAc...) asparagine glycosylation is present at Asn-630. The EGF-like domain occupies 663-697 (LQYNCEPQEMCHGNGVCNNFKHCHCDAGFAPPDCS). Cystine bridges form between Cys-667–Cys-679, Cys-673–Cys-685, and Cys-687–Cys-696. Residues 741–761 (VMVLVVPIFLVVLLCCLMLIA) form a helical membrane-spanning segment. Over 762-791 (YLWSEVQEVVSPPSSSESSSSSSWSDSDSQ) the chain is Cytoplasmic. The tract at residues 772–791 (SPPSSSESSSSSSWSDSDSQ) is disordered.

Heterodimer with ADAM2/fertilin subunit beta. Testis.

It localises to the membrane. Its function is as follows. May be involved in sperm-egg fusion. The chain is Disintegrin and metalloproteinase domain-containing protein 1a (Adam1a) from Mus musculus (Mouse).